We begin with the raw amino-acid sequence, 30 residues long: Hainantoxin F7-28.42 (30 aa).

Expressed by the venom gland.

The protein localises to the secreted. In Cyriopagopus hainanus (Chinese bird spider), this protein is Hainantoxin F7-28.42.